The chain runs to 210 residues: Ras-related protein RABC2a (210 aa).

20 to 27 is a binding site for GTP; it reads GDSGVGKS. An Effector region motif is present at residues 41 to 49; the sequence is LAPTIGVDF. GTP contacts are provided by residues 67-71, 127-130, and 157-158; these read DTAGQ, NKVD, and SA. S-geranylgeranyl cysteine attachment occurs at residues Cys208 and Cys209.

The protein belongs to the small GTPase superfamily. Rab family. As to quaternary structure, interacts with XI-2/MYA2.

It is found in the cell membrane. The protein localises to the cytoplasm. Intracellular vesicle trafficking and protein transport. The polypeptide is Ras-related protein RABC2a (RABC2A) (Arabidopsis thaliana (Mouse-ear cress)).